A 284-amino-acid polypeptide reads, in one-letter code: Extracellular metalloprotease VDBG_01143 (284 aa).

Residues 1–18 (MLFKSLFVAAATAVGVSG) form the signal peptide. The N-linked (GlcNAc...) asparagine glycan is linked to Asn-58. His-200 contributes to the Zn(2+) binding site. Glu-201 is an active-site residue. Position 204 (His-204) interacts with Zn(2+). Cys-236 and Cys-263 are joined by a disulfide.

This sequence belongs to the peptidase M43B family.

It is found in the secreted. In terms of biological role, secreted metalloproteinase that allows assimilation of proteinaceous substrates. The chain is Extracellular metalloprotease VDBG_01143 from Verticillium alfalfae (strain VaMs.102 / ATCC MYA-4576 / FGSC 10136) (Verticillium wilt of alfalfa).